A 621-amino-acid polypeptide reads, in one-letter code: Pentatricopeptide repeat-containing protein At3g48250, chloroplastic (621 aa).

The N-terminal 67 residues, M1–V67, are a transit peptide targeting the chloroplast. 10 PPR repeats span residues S122–L156, D157–S194, S262–M296, D297–P331, S332–L368, S369–P403, D404–P438, D439–I473, D474–P509, and W510–A544.

It belongs to the PPR family. P subfamily.

Its subcellular location is the plastid. It localises to the chloroplast. The chain is Pentatricopeptide repeat-containing protein At3g48250, chloroplastic from Arabidopsis thaliana (Mouse-ear cress).